We begin with the raw amino-acid sequence, 292 residues long: Sulfofructosephosphate aldolase (292 aa).

Lys-193 functions as the Schiff-base intermediate with substrate in the catalytic mechanism.

The protein belongs to the aldolase LacD family. As to quaternary structure, homotetramer.

It catalyses the reaction 6-deoxy-6-sulfo-D-fructose 1-phosphate = (2S)-3-sulfolactaldehyde + dihydroxyacetone phosphate. In terms of biological role, cleaves 6-deoxy-6-sulfo-D-fructose 1-phosphate (SFP) to form dihydroxyacetone phosphate (DHAP) and 3-sulfolactaldehyde (SLA). The sequence is that of Sulfofructosephosphate aldolase (yihT) from Salmonella typhi.